Reading from the N-terminus, the 206-residue chain is Large ribosomal subunit protein uL4 (206 aa).

Residues 48 to 97 (THAVKNRSLVSGGGKKPWKQKHTGRARQGSTRASQWVGGGKAMGPKPRDY) are disordered. Residues 63–72 (KPWKQKHTGR) show a composition bias toward basic residues.

It belongs to the universal ribosomal protein uL4 family. In terms of assembly, part of the 50S ribosomal subunit.

Functionally, one of the primary rRNA binding proteins, this protein initially binds near the 5'-end of the 23S rRNA. It is important during the early stages of 50S assembly. It makes multiple contacts with different domains of the 23S rRNA in the assembled 50S subunit and ribosome. Forms part of the polypeptide exit tunnel. This chain is Large ribosomal subunit protein uL4, found in Anaeromyxobacter dehalogenans (strain 2CP-1 / ATCC BAA-258).